Here is a 269-residue protein sequence, read N- to C-terminus: Gap junction gamma-3 protein (269 aa).

The Extracellular portion of the chain corresponds to Met1–Arg33. Residues Phe34–Val54 traverse the membrane as a helical segment. The Cytoplasmic portion of the chain corresponds to Phe55–Arg86. A helical transmembrane segment spans residues Phe87–Leu107. The Extracellular segment spans residues Tyr108–Leu145. A helical transmembrane segment spans residues Leu146–Val166. The Cytoplasmic segment spans residues Gln167–Asn205. The chain crosses the membrane as a helical span at residues Ile206–Gly226. The Extracellular portion of the chain corresponds to Leu227–Phe269. Residue Ser261 is modified to Phosphoserine.

Belongs to the connexin family. Gamma-type subfamily. A connexon is composed of a hexamer of connexins. In terms of tissue distribution, CNS specific. Expression is restricted to brain, spinal cord, and sciatic nerve.

Its subcellular location is the cell membrane. The protein resides in the cell junction. It is found in the gap junction. In terms of biological role, one gap junction consists of a cluster of closely packed pairs of transmembrane channels, the connexons, through which materials of low MW diffuse from one cell to a neighboring cell. This chain is Gap junction gamma-3 protein (Gjc3), found in Mus musculus (Mouse).